The following is a 95-amino-acid chain: Toxin Tbo-IT2 (95 aa).

An N-terminal signal peptide occupies residues 1 to 23 (MTMKTLCLSLIVIGVLILVAVKA). Residues 24–53 (EDYVNINSLEEAPEENVNINNLEETPEESR) constitute a propeptide that is removed on maturation. 5 cysteine pairs are disulfide-bonded: C54/C68, C61/C73, C67/C84, C70/C92, and C75/C82. At C92 the chain carries Cysteine amide.

Belongs to the neurotoxin 02 (plectoxin) family. 02 (plectoxin) subfamily. Expressed by the venom gland.

The protein localises to the secreted. This recombinant (non-amidated) toxin shows insecticidal activity on larvae of the housefly Musca domestica and has no activity on a panel of expressed neuronal receptors and ion channels. The chain is Toxin Tbo-IT2 from Tibellus oblongus (Oblong running crab spider).